A 320-amino-acid chain; its full sequence is Ferrochelatase (320 aa).

Residues His-194 and Glu-275 each coordinate Fe cation.

It belongs to the ferrochelatase family. In terms of assembly, monomer.

The protein resides in the cytoplasm. The enzyme catalyses heme b + 2 H(+) = protoporphyrin IX + Fe(2+). It functions in the pathway porphyrin-containing compound metabolism; protoheme biosynthesis; protoheme from protoporphyrin-IX: step 1/1. Its function is as follows. Catalyzes the ferrous insertion into protoporphyrin IX. This is Ferrochelatase from Escherichia coli O157:H7 (strain EC4115 / EHEC).